Reading from the N-terminus, the 458-residue chain is Pyruvate kinase (458 aa).

Position 33 (Arg33) interacts with substrate. K(+) contacts are provided by Asn35, Ser37, and Asp67. ATP is bound at residue 35-38 (NASH). Residues Arg74 and Lys148 each coordinate ATP. Residue Glu214 coordinates Mg(2+). The substrate site is built by Gly237, Asp238, and Thr270. Asp238 is a binding site for Mg(2+).

Belongs to the pyruvate kinase family. Homotetramer. It depends on a divalent metal cation as a cofactor.

It carries out the reaction pyruvate + ATP = phosphoenolpyruvate + ADP + H(+). It functions in the pathway carbohydrate degradation; glycolysis; pyruvate from D-glyceraldehyde 3-phosphate: step 5/5. With respect to regulation, not activated by classical allosteric effectors. The sequence is that of Pyruvate kinase (pyk) from Aeropyrum pernix (strain ATCC 700893 / DSM 11879 / JCM 9820 / NBRC 100138 / K1).